Consider the following 500-residue polypeptide: NAD(P)H-quinone oxidoreductase chain 4, chloroplastic (500 aa).

14 consecutive transmembrane segments (helical) span residues 4–24, 35–55, 87–107, 113–130, 134–154, 167–187, 207–227, 242–262, 272–292, 305–325, 330–350, 386–406, 416–436, and 462–482; these read FPWL…IFFL, YTIC…CYHF, IGPV…AWPV, LFHF…GSFS, LLLF…LLSM, FILY…GVGL, VALE…KLPI, HYST…YGLI, AHSI…IYAA, IAYS…SITD, GAIL…FLAG, LALP…GIIT, IVIT…LLSM, and LFVS…PDFV.

This sequence belongs to the complex I subunit 4 family.

The protein resides in the plastid. It localises to the chloroplast thylakoid membrane. It catalyses the reaction a plastoquinone + NADH + (n+1) H(+)(in) = a plastoquinol + NAD(+) + n H(+)(out). It carries out the reaction a plastoquinone + NADPH + (n+1) H(+)(in) = a plastoquinol + NADP(+) + n H(+)(out). The sequence is that of NAD(P)H-quinone oxidoreductase chain 4, chloroplastic from Guizotia abyssinica (Niger).